A 379-amino-acid chain; its full sequence is Elongation factor Ts, mitochondrial (379 aa).

A mitochondrion-targeting transit peptide spans 1 to 33 (MAWGQGAKRSILGLLFRSQHQTARAYSSSAFQT).

The protein belongs to the EF-Ts family.

It is found in the mitochondrion. In terms of biological role, associates with the EF-Tu.GDP complex and induces the exchange of GDP to GTP. It remains bound to the aminoacyl-tRNA.EF-Tu.GTP complex up to the GTP hydrolysis stage on the ribosome. The protein is Elongation factor Ts, mitochondrial of Zea mays (Maize).